The primary structure comprises 625 residues: MSGYVLFSRGATAAAAAARASRVLRVFTERRRTLHTSLQSCSFAKELFLGHIQQKGVFPFPEVSQEELSEINQFVGPLEKFFNEEVDSRKIDQEGKIPADTLAKLKSLGLFGIQVPEEYGGLGLSNTMYARLGEIISMDASITVTLAAHQAIGLKGIILVGNEEQKAKYLPKLSSGEHIAAFCLTEPASGSDAASIQTRATLSEDKKYFVLNGSKVWITNGGLANIFTVFAKTEVVDSDGSIKDKMTAFIVERDFGGITNGKPEDKLGIRGSNTCEVHFENTRVPVENVLGEVGGGFKVAMNILNSGRFSMGSAVAGMLKKLIEQTAEYACTRKQFNRNLSEFGLIQEKFALMAQKAYVMESMAYLTSGMLDQPGFPDCSIEAAMVKVFSSEAAWQCVSEALQILGGSGYMKDYPYERMLRDARILLIFEGTNEILRLFIALTGLQHAGRILTSRIKELKSGNVTTVMETIGRKLRDSLGRTVDLGLSSNIAVVHPSLGDSANKLEENVHYFGRTVETLLLRFGKTIVEEQLVLKRVANILINLYGMTAVLSRASRSIRIGLKNHDHEILLANMFCVEAYFQNLFSLSQLDKYAPENLDEQIKKVSQQILEKRAYICAHPLDRAS.

A mitochondrion-targeting transit peptide spans 1-41 (MSGYVLFSRGATAAAAAARASRVLRVFTERRRTLHTSLQSC). An N6-acetyllysine modification is found at Lys45. At Lys96 the chain carries N6-succinyllysine. The Proton acceptor role is filled by Glu430. At Thr482 the chain carries Phosphothreonine. Lys525 carries the post-translational modification N6-acetyllysine; alternate. Lys525 carries the N6-succinyllysine; alternate modification.

The protein belongs to the acyl-CoA dehydrogenase family. As to quaternary structure, homodimer. Interacts with NDUFAF1 and ECSIT. Part of the mitochondrial complex I assembly/MCIA complex that comprises at least the core subunits TMEM126B, NDUFAF1, ECSIT and ACAD9 and complement subunits such as COA1 and TMEM186. Interacts with TMEM70 and TMEM242. FAD is required as a cofactor.

It localises to the mitochondrion inner membrane. It carries out the reaction eicosanoyl-CoA + oxidized [electron-transfer flavoprotein] + H(+) = (2E)-eicosenoyl-CoA + reduced [electron-transfer flavoprotein]. It catalyses the reaction octadecanoyl-CoA + oxidized [electron-transfer flavoprotein] + H(+) = (2E)-octadecenoyl-CoA + reduced [electron-transfer flavoprotein]. The enzyme catalyses oxidized [electron-transfer flavoprotein] + hexadecanoyl-CoA + H(+) = (2E)-hexadecenoyl-CoA + reduced [electron-transfer flavoprotein]. The catalysed reaction is decanoyl-CoA + oxidized [electron-transfer flavoprotein] + H(+) = (2E)-decenoyl-CoA + reduced [electron-transfer flavoprotein]. It carries out the reaction nonanoyl-CoA + oxidized [electron-transfer flavoprotein] + H(+) = (2E)-nonenoyl-CoA + reduced [electron-transfer flavoprotein]. It catalyses the reaction pentadecanoyl-CoA + oxidized [electron-transfer flavoprotein] + H(+) = (2E)-pentadecenoyl-CoA + reduced [electron-transfer flavoprotein]. The enzyme catalyses undecanoyl-CoA + oxidized [electron-transfer flavoprotein] + H(+) = trans-2-undecenoyl-CoA + reduced [electron-transfer flavoprotein]. The catalysed reaction is (9Z)-hexadecenoyl-CoA + oxidized [electron-transfer flavoprotein] + H(+) = (2E,9Z)-hexadecadienoyl-CoA + reduced [electron-transfer flavoprotein]. It carries out the reaction heptadecanoyl-CoA + oxidized [electron-transfer flavoprotein] + H(+) = trans-2-heptadecenoyl-CoA + reduced [electron-transfer flavoprotein]. It catalyses the reaction (9E)-octadecenoyl-CoA + oxidized [electron-transfer flavoprotein] + H(+) = (2E,9E)-octadecadienoyl-CoA + reduced [electron-transfer flavoprotein]. The enzyme catalyses oxidized [electron-transfer flavoprotein] + (9Z)-octadecenoyl-CoA + H(+) = (2E,9Z)-octadecadienoyl-CoA + reduced [electron-transfer flavoprotein]. The catalysed reaction is (9Z,12Z)-octadecadienoyl-CoA + oxidized [electron-transfer flavoprotein] + H(+) = (2E,9Z,12Z)-octadecatrienoyl-CoA + reduced [electron-transfer flavoprotein]. It carries out the reaction (4Z,7Z,10Z,13Z,16Z,19Z)-docosahexaenoyl-CoA + oxidized [electron-transfer flavoprotein] + H(+) = (2E,4Z,7Z,10Z,13Z,16Z,19Z)-docosaheptaenoyl-CoA + reduced [electron-transfer flavoprotein]. It catalyses the reaction tetradecanoyl-CoA + oxidized [electron-transfer flavoprotein] + H(+) = (2E)-tetradecenoyl-CoA + reduced [electron-transfer flavoprotein]. Functionally, as part of the MCIA complex, primarily participates in the assembly of the mitochondrial complex I and therefore plays a role in oxidative phosphorylation. This moonlighting protein also has a dehydrogenase activity toward a broad range of substrates with greater specificity for long-chain unsaturated acyl-CoAs. However, in vivo, it does not seem to play a primary role in fatty acid oxidation. In addition, the function in complex I assembly is independent of the dehydrogenase activity of the protein. The sequence is that of Complex I assembly factor ACAD9, mitochondrial from Rattus norvegicus (Rat).